The chain runs to 338 residues: MQIFYDKDCDLSIIQGKKVAIIGYGSQGHAHALNLKDSGVDVTVGLRANSASWKKAENAGLKVAEVPEAVKQADLVMILTPDEFQSQLYRDVIEPNIKEGATLAFAHGFSVLYNQVVPRQDLDVIMVAPKAPGHTVRSEFQRGSGVPDLIAIHQDASGNARNVALSYASGVGGGRTGIIETSFREETETDLFGEQAVLCGGAVELVKMGFETLVEAGYSPEMAYFECLHELKLIVDLMFEGGIADMNYSVSNNAEYGEYVTGVEVINEQSREAMRNALKRIQSGEYAKMFIQEGALNYPSMTARRRQNAAHGIEVTGSKLRAMMPWIQANKIVDKEKN.

Residues 1 to 181 (MQIFYDKDCD…GGGRTGIIET (181 aa)) enclose the KARI N-terminal Rossmann domain. NADP(+) is bound by residues 24–27 (YGSQ), R47, S50, S52, and 82–85 (DEFQ). H107 is an active-site residue. Residue G133 coordinates NADP(+). The KARI C-terminal knotted domain maps to 182–327 (SFREETETDL…SKLRAMMPWI (146 aa)). Mg(2+)-binding residues include D190, E194, E226, and E230. S251 is a binding site for substrate.

It belongs to the ketol-acid reductoisomerase family. Mg(2+) is required as a cofactor.

The enzyme catalyses (2R)-2,3-dihydroxy-3-methylbutanoate + NADP(+) = (2S)-2-acetolactate + NADPH + H(+). The catalysed reaction is (2R,3R)-2,3-dihydroxy-3-methylpentanoate + NADP(+) = (S)-2-ethyl-2-hydroxy-3-oxobutanoate + NADPH + H(+). It functions in the pathway amino-acid biosynthesis; L-isoleucine biosynthesis; L-isoleucine from 2-oxobutanoate: step 2/4. The protein operates within amino-acid biosynthesis; L-valine biosynthesis; L-valine from pyruvate: step 2/4. Its function is as follows. Involved in the biosynthesis of branched-chain amino acids (BCAA). Catalyzes an alkyl-migration followed by a ketol-acid reduction of (S)-2-acetolactate (S2AL) to yield (R)-2,3-dihydroxy-isovalerate. In the isomerase reaction, S2AL is rearranged via a Mg-dependent methyl migration to produce 3-hydroxy-3-methyl-2-ketobutyrate (HMKB). In the reductase reaction, this 2-ketoacid undergoes a metal-dependent reduction by NADPH to yield (R)-2,3-dihydroxy-isovalerate. The sequence is that of Ketol-acid reductoisomerase (NADP(+)) from Acinetobacter baylyi (strain ATCC 33305 / BD413 / ADP1).